The primary structure comprises 155 residues: Small ribosomal subunit protein uS7 (155 aa).

It belongs to the universal ribosomal protein uS7 family. Part of the 30S ribosomal subunit. Contacts proteins S9 and S11.

Functionally, one of the primary rRNA binding proteins, it binds directly to 16S rRNA where it nucleates assembly of the head domain of the 30S subunit. Is located at the subunit interface close to the decoding center, probably blocks exit of the E-site tRNA. This is Small ribosomal subunit protein uS7 from Chlorobium phaeovibrioides (strain DSM 265 / 1930) (Prosthecochloris vibrioformis (strain DSM 265)).